A 214-amino-acid polypeptide reads, in one-letter code: Oocyte zinc finger protein XlCOF10 (214 aa).

7 C2H2-type zinc fingers span residues 1–23, 29–51, 57–79, 85–107, 113–135, 141–163, and 169–191; these read FSCS…RQLH, FTCS…HRIH, FTCD…QKSH, FCCS…QRTH, FTCT…QKSH, FSCS…QRIH, and FSCS…EKCH.

It belongs to the krueppel C2H2-type zinc-finger protein family.

The protein resides in the nucleus. In terms of biological role, may be involved in transcriptional regulation. The polypeptide is Oocyte zinc finger protein XlCOF10 (Xenopus laevis (African clawed frog)).